A 423-amino-acid chain; its full sequence is Gamma-glutamyl phosphate reductase (423 aa).

It belongs to the gamma-glutamyl phosphate reductase family.

It localises to the cytoplasm. The catalysed reaction is L-glutamate 5-semialdehyde + phosphate + NADP(+) = L-glutamyl 5-phosphate + NADPH + H(+). It functions in the pathway amino-acid biosynthesis; L-proline biosynthesis; L-glutamate 5-semialdehyde from L-glutamate: step 2/2. Its function is as follows. Catalyzes the NADPH-dependent reduction of L-glutamate 5-phosphate into L-glutamate 5-semialdehyde and phosphate. The product spontaneously undergoes cyclization to form 1-pyrroline-5-carboxylate. The protein is Gamma-glutamyl phosphate reductase of Burkholderia thailandensis (strain ATCC 700388 / DSM 13276 / CCUG 48851 / CIP 106301 / E264).